The sequence spans 293 residues: tRNA pseudouridine synthase B (293 aa).

Asp-39 functions as the Nucleophile in the catalytic mechanism.

Belongs to the pseudouridine synthase TruB family. Type 1 subfamily.

The enzyme catalyses uridine(55) in tRNA = pseudouridine(55) in tRNA. Functionally, responsible for synthesis of pseudouridine from uracil-55 in the psi GC loop of transfer RNAs. This chain is tRNA pseudouridine synthase B, found in Streptococcus mutans serotype c (strain ATCC 700610 / UA159).